Consider the following 238-residue polypeptide: Uridylate kinase (238 aa).

Position 12 to 15 (12 to 15 (KLSG)) interacts with ATP. Residue glycine 54 participates in UMP binding. Positions 55 and 59 each coordinate ATP. Residues aspartate 74 and 135–142 (TGNPFFTT) each bind UMP. Residues threonine 162, tyrosine 168, and aspartate 171 each coordinate ATP.

It belongs to the UMP kinase family. Homohexamer.

It localises to the cytoplasm. The enzyme catalyses UMP + ATP = UDP + ADP. Its pathway is pyrimidine metabolism; CTP biosynthesis via de novo pathway; UDP from UMP (UMPK route): step 1/1. Its activity is regulated as follows. Inhibited by UTP. In terms of biological role, catalyzes the reversible phosphorylation of UMP to UDP. This Dechloromonas aromatica (strain RCB) protein is Uridylate kinase.